We begin with the raw amino-acid sequence, 310 residues long: Transcription initiation factor IIA subunit 1 (310 aa).

Disordered stretches follow at residues 52–78 (AISNQNDPDETTATTTTTQPQSTLSTV), 91–197 (IQLN…NNKD), and 218–261 (VIPQ…DDPD). 2 stretches are compositionally biased toward low complexity: residues 62–77 (TTATTTTTQPQSTLST) and 122–160 (SNGTSPTMNSSNGSNNNNNNNNSNNSSNSSNNNNLPSSL). Acidic residues-rich tracts occupy residues 173 to 183 (TLDESDNDDDN), 225 to 236 (LNDDDDLDDEEI), and 246 to 261 (DSLGSDLDDDDDDDPD).

This sequence belongs to the TFIIA subunit 1 family. TFIIA is a heterodimer of the large subunit 1 and a small subunit gamma.

Its subcellular location is the nucleus. Functionally, TFIIA is a component of the transcription machinery of RNA polymerase II and plays an important role in transcriptional activation. TFIIA in a complex with tbp mediates transcriptional activity. This Dictyostelium discoideum (Social amoeba) protein is Transcription initiation factor IIA subunit 1 (gtf2a1).